The following is a 247-amino-acid chain: tRNA (guanine-N(7)-)-methyltransferase (247 aa).

S-adenosyl-L-methionine contacts are provided by residues Gly70, 93 to 94 (EI), 128 to 129 (NA), and Leu148. Residue Asp151 is part of the active site. 226–228 (SEE) contacts S-adenosyl-L-methionine.

This sequence belongs to the class I-like SAM-binding methyltransferase superfamily. TrmB family.

It localises to the nucleus. The enzyme catalyses guanosine(46) in tRNA + S-adenosyl-L-methionine = N(7)-methylguanosine(46) in tRNA + S-adenosyl-L-homocysteine. Its pathway is tRNA modification; N(7)-methylguanine-tRNA biosynthesis. Functionally, catalyzes the formation of N(7)-methylguanine at position 46 (m7G46) in tRNA. This Drosophila persimilis (Fruit fly) protein is tRNA (guanine-N(7)-)-methyltransferase.